Consider the following 408-residue polypeptide: UDP-N-acetylglucosamine--dolichyl-phosphate N-acetylglucosaminephosphotransferase (408 aa).

The next 2 helical transmembrane spans lie at 6 to 26 (SLLG…IYLP) and 32 to 52 (WIIV…YKLI). 2 residues coordinate UDP-N-acetyl-alpha-D-glucosamine: Asp68 and Glu84. 2 consecutive transmembrane segments (helical) span residues 87 to 107 (GICV…FQWF) and 120 to 140 (AALT…VLNL). Residue Lys145 participates in dolichyl phosphate binding. Transmembrane regions (helical) follow at residues 147–167 (ILPM…TTVV) and 181–201 (LGVV…LAIF). A dolichyl phosphate-binding site is contributed by 200–208 (IFCTNSINI). Asn207 provides a ligand contact to Mg(2+). Asn213 is a binding site for UDP-N-acetyl-alpha-D-glucosamine. 2 consecutive transmembrane segments (helical) span residues 221–241 (VVIA…ASSV) and 258–278 (HLFS…LLFY). Residue Asp289 participates in Mg(2+) binding. Residues 297 to 317 (MCFAVVAILCHFSKTLLLFFI) form a helical membrane-spanning segment. 338 to 340 (RHR) serves as a coordination point for UDP-N-acetyl-alpha-D-glucosamine. The next 2 membrane-spanning stretches (helical) occupy residues 351 to 371 (MEAI…TGPL) and 376 to 396 (LCVY…GIRY).

This sequence belongs to the glycosyltransferase 4 family. As to quaternary structure, homodimer. It depends on Mg(2+) as a cofactor.

The protein resides in the endoplasmic reticulum membrane. The enzyme catalyses a di-trans,poly-cis-dolichyl phosphate + UDP-N-acetyl-alpha-D-glucosamine = an N-acetyl-alpha-D-glucosaminyl-diphospho-di-trans,poly-cis-dolichol + UMP. The protein operates within protein modification; protein glycosylation. Inhibited by natural nucleoside antibiotic tunicamycin, which acts as a structural analog and competitor of UDP-GlcNAc. Its function is as follows. UDP-N-acetylglucosamine--dolichyl-phosphate N-acetylglucosaminephosphotransferase that operates in the biosynthetic pathway of dolichol-linked oligosaccharides, the glycan precursors employed in protein asparagine (N)-glycosylation. The assembly of dolichol-linked oligosaccharides begins on the cytosolic side of the endoplasmic reticulum membrane and finishes in its lumen. The sequential addition of sugars to dolichol pyrophosphate produces dolichol-linked oligosaccharides containing fourteen sugars, including two GlcNAcs, nine mannoses and three glucoses. Once assembled, the oligosaccharide is transferred from the lipid to nascent proteins by oligosaccharyltransferases. Catalyzes the initial step of dolichol-linked oligosaccharide biosynthesis, transfering GlcNAc-1-P from cytosolic UDP-GlcNAc onto the carrier lipid dolichyl phosphate (P-dolichol), yielding GlcNAc-P-P-dolichol embedded in the cytoplasmic leaflet of the endoplasmic reticulum membrane. This Dictyostelium discoideum (Social amoeba) protein is UDP-N-acetylglucosamine--dolichyl-phosphate N-acetylglucosaminephosphotransferase (alg7).